We begin with the raw amino-acid sequence, 251 residues long: Triosephosphate isomerase (251 aa).

Residue 9-11 (NWK) coordinates substrate. Catalysis depends on His95, which acts as the Electrophile. The Proton acceptor role is filled by Glu167. Substrate contacts are provided by residues Gly173, Ser213, and 234 to 235 (GG).

It belongs to the triosephosphate isomerase family. As to quaternary structure, homodimer.

The protein resides in the cytoplasm. It catalyses the reaction D-glyceraldehyde 3-phosphate = dihydroxyacetone phosphate. The protein operates within carbohydrate biosynthesis; gluconeogenesis. Its pathway is carbohydrate degradation; glycolysis; D-glyceraldehyde 3-phosphate from glycerone phosphate: step 1/1. Its function is as follows. Involved in the gluconeogenesis. Catalyzes stereospecifically the conversion of dihydroxyacetone phosphate (DHAP) to D-glyceraldehyde-3-phosphate (G3P). The protein is Triosephosphate isomerase of Enterococcus faecalis (strain ATCC 700802 / V583).